Consider the following 50-residue polypeptide: Large ribosomal subunit protein bL32c (50 aa).

It belongs to the bacterial ribosomal protein bL32 family.

The protein resides in the plastid. The sequence is that of Large ribosomal subunit protein bL32c (rpl32) from Euglena longa (Euglenophycean alga).